The following is a 242-amino-acid chain: Enolase-phosphatase E1 (242 aa).

It belongs to the HAD-like hydrolase superfamily. MasA/MtnC family. In terms of assembly, monomer. Mg(2+) is required as a cofactor.

It catalyses the reaction 5-methylsulfanyl-2,3-dioxopentyl phosphate + H2O = 1,2-dihydroxy-5-(methylsulfanyl)pent-1-en-3-one + phosphate. The protein operates within amino-acid biosynthesis; L-methionine biosynthesis via salvage pathway; L-methionine from S-methyl-5-thio-alpha-D-ribose 1-phosphate: step 3/6. Its pathway is amino-acid biosynthesis; L-methionine biosynthesis via salvage pathway; L-methionine from S-methyl-5-thio-alpha-D-ribose 1-phosphate: step 4/6. Bifunctional enzyme that catalyzes the enolization of 2,3-diketo-5-methylthiopentyl-1-phosphate (DK-MTP-1-P) into the intermediate 2-hydroxy-3-keto-5-methylthiopentenyl-1-phosphate (HK-MTPenyl-1-P), which is then dephosphorylated to form the acireductone 1,2-dihydroxy-3-keto-5-methylthiopentene (DHK-MTPene). The protein is Enolase-phosphatase E1 of Synechococcus sp. (strain WH7803).